The chain runs to 407 residues: NAD(P)H-quinone oxidoreductase subunit 1 (407 aa).

The next 9 helical transmembrane spans lie at 28–48 (WLPL…IAAV), 96–116 (WLFT…YLVI), 127–147 (ITIG…GALM), 175–195 (LALS…VDIV), 203–223 (LFSF…IFLI), 267–287 (LILA…FIVP), 309–329 (ALVG…LAIL), 347–367 (WKFL…LVLL), and 374–394 (TLPL…AMSL).

The protein belongs to the complex I subunit 1 family. As to quaternary structure, NDH-1 is composed of at least 11 different subunits.

It is found in the cell inner membrane. The enzyme catalyses a plastoquinone + NADH + (n+1) H(+)(in) = a plastoquinol + NAD(+) + n H(+)(out). It carries out the reaction a plastoquinone + NADPH + (n+1) H(+)(in) = a plastoquinol + NADP(+) + n H(+)(out). Its function is as follows. NDH-1 shuttles electrons from an unknown electron donor, via FMN and iron-sulfur (Fe-S) centers, to quinones in the respiratory and/or the photosynthetic chain. The immediate electron acceptor for the enzyme in this species is believed to be plastoquinone. Couples the redox reaction to proton translocation, and thus conserves the redox energy in a proton gradient. This chain is NAD(P)H-quinone oxidoreductase subunit 1, found in Gloeobacter violaceus (strain ATCC 29082 / PCC 7421).